The sequence spans 892 residues: Alanine--tRNA ligase (892 aa).

Residues His580, His584, Cys682, and His686 each coordinate Zn(2+).

It belongs to the class-II aminoacyl-tRNA synthetase family. The cofactor is Zn(2+).

It is found in the cytoplasm. The catalysed reaction is tRNA(Ala) + L-alanine + ATP = L-alanyl-tRNA(Ala) + AMP + diphosphate. Its function is as follows. Catalyzes the attachment of alanine to tRNA(Ala) in a two-step reaction: alanine is first activated by ATP to form Ala-AMP and then transferred to the acceptor end of tRNA(Ala). Also edits incorrectly charged Ser-tRNA(Ala) and Gly-tRNA(Ala) via its editing domain. The chain is Alanine--tRNA ligase from Salinispora tropica (strain ATCC BAA-916 / DSM 44818 / JCM 13857 / NBRC 105044 / CNB-440).